The chain runs to 317 residues: Nucleosome assembly protein 1;4 (317 aa).

Residues 52 to 67 (LSPKVTKRVLFLKDIQ) carry the Nuclear export signal motif. The short motif at 214-219 (KKKTKK) is the Nuclear localization signal element. The segment at 297–317 (ALVDEDDSDDNDDDDNDEKSD) is disordered. Residues 298 to 317 (LVDEDDSDDNDDDDNDEKSD) are compositionally biased toward acidic residues.

Belongs to the nucleosome assembly protein (NAP) family. Can form homomeric and heteromeric protein complexes with NAP1;1, NAP1;2 and NAP1;3. Binds histone H2A. Expressed in the root segment covering the apical end of the differentiation zone, the elongation zone of the root and the mature pollen within the anthers of open flowers.

It is found in the nucleus. It localises to the cytoplasm. May modulate chromatin structure by regulation of nucleosome assembly/disassembly. In Arabidopsis thaliana (Mouse-ear cress), this protein is Nucleosome assembly protein 1;4 (NAP1;4).